The following is a 431-amino-acid chain: Tol-Pal system protein TolB (431 aa).

A signal peptide spans 1-26 (MRLMTKLGFRALVASCLIAAGAAANA). Residues 411–431 (PQILSVQGGSVREPSWGPFMQ) are disordered.

The protein belongs to the TolB family. In terms of assembly, the Tol-Pal system is composed of five core proteins: the inner membrane proteins TolA, TolQ and TolR, the periplasmic protein TolB and the outer membrane protein Pal. They form a network linking the inner and outer membranes and the peptidoglycan layer.

It localises to the periplasm. In terms of biological role, part of the Tol-Pal system, which plays a role in outer membrane invagination during cell division and is important for maintaining outer membrane integrity. This is Tol-Pal system protein TolB from Burkholderia ambifaria (strain ATCC BAA-244 / DSM 16087 / CCUG 44356 / LMG 19182 / AMMD) (Burkholderia cepacia (strain AMMD)).